The sequence spans 473 residues: Gamma-aminobutyric acid receptor subunit beta-3 (473 aa).

The N-terminal stretch at 1-25 (MWGFAGGRLFGIFSAPVLVAVVCCA) is a signal peptide. The Extracellular segment spans residues 26–246 (QSVNDPGNMS…FRLKRNIGYF (221 aa)). N-linked (GlcNAc...) asparagine glycans are attached at residues asparagine 33 and asparagine 105. Histamine is bound at residue tyrosine 122. A disulfide bridge links cysteine 161 with cysteine 175. Asparagine 174 carries an N-linked (GlcNAc...) asparagine glycan. 4-aminobutanoate contacts are provided by glutamate 180, tyrosine 182, and threonine 227. Histamine contacts are provided by residues 181–182 (SY) and threonine 227. Residues 247-267 (ILQTYMPSILITILSWVSFWI) traverse the membrane as a helical segment. At 268 to 271 (NYDA) the chain is on the cytoplasmic side. A helical transmembrane segment spans residues 272 to 292 (SAARVALGITTVLTMTTINTH). The Extracellular portion of the chain corresponds to 293-304 (LRETLPKIPYVK). The helical transmembrane segment at 305-328 (AIDMYLMGCFVFVFLALLEYAFVN) threads the bilayer. The Cytoplasmic portion of the chain corresponds to 329-447 (YIFFGRGPQR…KIPDLTDVNA (119 aa)). A helical membrane pass occupies residues 448–470 (IDRWSRIVFPFTFSLFNLVYWLY). Over 471 to 473 (YVN) the chain is Extracellular.

It belongs to the ligand-gated ion channel (TC 1.A.9) family. Gamma-aminobutyric acid receptor (TC 1.A.9.5) subfamily. GABRB3 sub-subfamily. In terms of assembly, heteropentamer, formed by a combination of alpha (GABRA1-6), beta (GABRB1-3), gamma (GABRG1-3), delta (GABRD), epsilon (GABRE), rho (GABRR1-3), pi (GABRP) and theta (GABRQ) chains, each subunit exhibiting distinct physiological and pharmacological properties. Can form functional homopentamers (in vitro). Interacts with UBQLN1. May interact with KIF21B. Identified in a complex of 720 kDa composed of LHFPL4, NLGN2, GABRA1, GABRB2, GABRG2 and GABRB3. Interacts with LHFPL4. Interacts with GIT1; this interaction is required for synaptic GABRB3 surface stability and inhibitory synapse strength.

The protein resides in the postsynaptic cell membrane. It localises to the cell membrane. The protein localises to the cytoplasmic vesicle membrane. The enzyme catalyses chloride(in) = chloride(out). Potentiated by histamine. In terms of biological role, beta subunit of the heteropentameric ligand-gated chloride channel gated by gamma-aminobutyric acid (GABA), a major inhibitory neurotransmitter in the brain. GABA-gated chloride channels, also named GABA(A) receptors (GABAAR), consist of five subunits arranged around a central pore and contain GABA active binding site(s) located at the alpha and beta subunit interface(s). GABAARs containing beta-3/GABRB3 subunit are found at both synaptic and extrasynaptic sites. When activated by GABA, GABAARs selectively allow the flow of chloride anions across the cell membrane down their electrochemical gradient. Chloride influx into the postsynaptic neuron following GABAAR opening decreases the neuron ability to generate a new action potential, thereby reducing nerve transmission. GABAARs containing alpha-1 and beta-3 subunits exhibit synaptogenic activity; the gamma-2 subunit being necessary but not sufficient to induce rapid synaptic contacts formation. Extrasynaptic beta-3 receptors contribute to the tonic GABAergic inhibition. GABAARs containing alpha-1, beta-3 and epsilon subunits may permit spontaneous chloride channel activity while preserving the structural information required for GABA-gated openings. Beta-containing GABAARs can simultaneously bind GABA and histamine where histamine binds at the interface of two neighboring beta subunits, which may be involved in the regulation of sleep and wakefulness. Plays an important role in somatosensation and in the production of antinociception. This chain is Gamma-aminobutyric acid receptor subunit beta-3, found in Mus musculus (Mouse).